Reading from the N-terminus, the 73-residue chain is Copper chaperone ATX1 (73 aa).

Residues 4 to 68 form the HMA domain; sequence IKHYQFNVVM…KIKKTGKEVR (65 aa). Cysteine 15 and cysteine 18 together coordinate Cu(+).

This sequence belongs to the ATX1 family. As to quaternary structure, homodimer. Interacts with CCC2 via the copper anion.

The protein localises to the cytoplasm. Its activity is regulated as follows. Tetrathiomolybdate directly and reversibly down-regulates copper delivery to secreted metalloenzymes. Functionally, copper homeostasis factor that specifically transports copper to the secretory pathway for incorporation into copper enzymes destined for the cell surface or extracellular milieu. Shuttles copper to the transport ATPase CCC2 on a post-Golgi vesicle for eventual targeting to the cell-surface high-affinity iron uptake protein FET3. Protects against oxygen toxicity. The sequence is that of Copper chaperone ATX1 from Saccharomyces cerevisiae (strain ATCC 204508 / S288c) (Baker's yeast).